The primary structure comprises 268 residues: NADH-quinone oxidoreductase subunit B 2 (268 aa).

Residues Cys42, Cys43, Cys108, and Cys138 each coordinate [4Fe-4S] cluster. The interval 237 to 268 (SPNKAKGVAPEIRHNDLKRPAVEVDHARDEQR) is disordered. The segment covering 247 to 268 (EIRHNDLKRPAVEVDHARDEQR) has biased composition (basic and acidic residues).

Belongs to the complex I 20 kDa subunit family. NDH-1 is composed of 14 different subunits. Subunits NuoB, C, D, E, F, and G constitute the peripheral sector of the complex. Requires [4Fe-4S] cluster as cofactor.

It is found in the cell membrane. It catalyses the reaction a quinone + NADH + 5 H(+)(in) = a quinol + NAD(+) + 4 H(+)(out). Its function is as follows. NDH-1 shuttles electrons from NADH, via FMN and iron-sulfur (Fe-S) centers, to quinones in the respiratory chain. The immediate electron acceptor for the enzyme in this species is believed to be ubiquinone. Couples the redox reaction to proton translocation (for every two electrons transferred, four hydrogen ions are translocated across the cytoplasmic membrane), and thus conserves the redox energy in a proton gradient. In Roseiflexus castenholzii (strain DSM 13941 / HLO8), this protein is NADH-quinone oxidoreductase subunit B 2.